Here is a 53-residue protein sequence, read N- to C-terminus: Conotoxin Cal9.2e (53 aa).

The propeptide occupies 1–6 (KKGVTQ). 3 disulfides stabilise this stretch: Cys-15-Cys-32, Cys-20-Cys-42, and Cys-22-Cys-47.

In terms of tissue distribution, expressed by the venom duct.

The protein resides in the secreted. Probable neurotoxin with unknown target. Possibly targets ion channels. This is Conotoxin Cal9.2e from Californiconus californicus (California cone).